The chain runs to 507 residues: Maturase K (507 aa).

It belongs to the intron maturase 2 family. MatK subfamily.

The protein resides in the plastid. Its subcellular location is the chloroplast. Its function is as follows. Usually encoded in the trnK tRNA gene intron. Probably assists in splicing its own and other chloroplast group II introns. The sequence is that of Maturase K from Buxus microphylla (Littleleaf boxwood).